Here is a 901-residue protein sequence, read N- to C-terminus: HTH-type transcriptional regulator MalT (901 aa).

39–46 (SPAGYGKT) contacts ATP. The region spanning 829–894 (ELIRTSPLTQ…DAVQHAQQLL (66 aa)) is the HTH luxR-type domain. The segment at residues 853-872 (NEQIAGELAVAATTIKTHIR) is a DNA-binding region (H-T-H motif).

This sequence belongs to the MalT family. Monomer in solution. Oligomerizes to an active state in the presence of the positive effectors ATP and maltotriose.

Activated by ATP and maltotriose, which are both required for DNA binding. Functionally, positively regulates the transcription of the maltose regulon whose gene products are responsible for uptake and catabolism of malto-oligosaccharides. Specifically binds to the promoter region of its target genes, recognizing a short DNA motif called the MalT box. The sequence is that of HTH-type transcriptional regulator MalT from Salmonella typhimurium (strain LT2 / SGSC1412 / ATCC 700720).